The sequence spans 623 residues: mRNA-capping enzyme (623 aa).

The tract at residues 13-224 (MGLPDRWLHC…IDNGRPSTSQ (212 aa)) is TPase. In terms of domain architecture, Tyrosine-protein phosphatase spans 44 to 196 (YDNQIAERRY…YDPTEDDKIL (153 aa)). Residue cysteine 136 is the Phosphocysteine intermediate of the active site. A compositionally biased stretch (polar residues) spans 213 to 229 (TQIDNGRPSTSQQIPAT). A disordered region spans residues 213–243 (TQIDNGRPSTSQQIPATNGNNNQNGNQLSGG). The segment covering 230–239 (NGNNNQNGNQ) has biased composition (low complexity). A GTase region spans residues 241–585 (SGGGDNSKLF…NPVTETYLIE (345 aa)). Lysine 311 functions as the N6-GMP-lysine intermediate in the catalytic mechanism. GTP is bound by residues arginine 316, arginine 331, 357-359 (DTE), 477-479 (KWK), and 553-558 (RERTDK). Positions 603–623 (HHQIHQQQLHEGEPEARRQKL) are disordered. Basic and acidic residues predominate over residues 610-623 (QLHEGEPEARRQKL).

It in the N-terminal section; belongs to the non-receptor class of the protein-tyrosine phosphatase family. The protein in the C-terminal section; belongs to the eukaryotic GTase family.

The protein localises to the nucleus. The catalysed reaction is a 5'-end triphospho-ribonucleoside in mRNA + H2O = a 5'-end diphospho-ribonucleoside in mRNA + phosphate + H(+). It catalyses the reaction a 5'-end diphospho-ribonucleoside in mRNA + GTP + H(+) = a 5'-end (5'-triphosphoguanosine)-ribonucleoside in mRNA + diphosphate. RNA triphosphatase activity is inhibited by magnesium. In terms of biological role, bifunctional mRNA-capping enzyme exhibiting RNA 5'-triphosphate monophosphatase activity in the N-terminal part and mRNA guanylyltransferase activity in the C-terminal part. Catalyzes the first two steps of cap formation: by removing the gamma-phosphate from the 5'-triphosphate end of nascent mRNA to yield a diphosphate end, and by transferring the GMP moiety of GTP to the 5'-diphosphate terminus via a covalent enzyme-GMP reaction intermediate. This chain is mRNA-capping enzyme (cel-1), found in Caenorhabditis elegans.